Consider the following 179-residue polypeptide: Large ribosomal subunit protein uL5 (179 aa).

This sequence belongs to the universal ribosomal protein uL5 family. In terms of assembly, part of the 50S ribosomal subunit; part of the 5S rRNA/L5/L18/L25 subcomplex. Contacts the 5S rRNA and the P site tRNA. Forms a bridge to the 30S subunit in the 70S ribosome.

This is one of the proteins that bind and probably mediate the attachment of the 5S RNA into the large ribosomal subunit, where it forms part of the central protuberance. In the 70S ribosome it contacts protein S13 of the 30S subunit (bridge B1b), connecting the 2 subunits; this bridge is implicated in subunit movement. Contacts the P site tRNA; the 5S rRNA and some of its associated proteins might help stabilize positioning of ribosome-bound tRNAs. The polypeptide is Large ribosomal subunit protein uL5 (Haemophilus ducreyi (strain 35000HP / ATCC 700724)).